A 388-amino-acid polypeptide reads, in one-letter code: Succinate--CoA ligase [ADP-forming] subunit beta (388 aa).

An ATP-grasp domain is found at 9–245 (KELLASYGLP…KSQENERELK (237 aa)). ATP-binding positions include Lys-46, 53-55 (GRG), Glu-100, Tyr-103, and Glu-108. Residues Asn-200 and Asp-214 each coordinate Mg(2+). Residues Asn-265 and 322–324 (GIV) each bind substrate.

Belongs to the succinate/malate CoA ligase beta subunit family. In terms of assembly, heterotetramer of two alpha and two beta subunits. The cofactor is Mg(2+).

The catalysed reaction is succinate + ATP + CoA = succinyl-CoA + ADP + phosphate. It catalyses the reaction GTP + succinate + CoA = succinyl-CoA + GDP + phosphate. Its pathway is carbohydrate metabolism; tricarboxylic acid cycle; succinate from succinyl-CoA (ligase route): step 1/1. In terms of biological role, succinyl-CoA synthetase functions in the citric acid cycle (TCA), coupling the hydrolysis of succinyl-CoA to the synthesis of either ATP or GTP and thus represents the only step of substrate-level phosphorylation in the TCA. The beta subunit provides nucleotide specificity of the enzyme and binds the substrate succinate, while the binding sites for coenzyme A and phosphate are found in the alpha subunit. The polypeptide is Succinate--CoA ligase [ADP-forming] subunit beta (Neisseria meningitidis serogroup B (strain ATCC BAA-335 / MC58)).